We begin with the raw amino-acid sequence, 210 residues long: A-kinase-interacting protein 1 (210 aa).

Disordered regions lie at residues 58–80 and 136–162; these read HLEK…ERPP and QRKD…EASQ.

As to quaternary structure, interacts with PRKACA and RELA. In terms of tissue distribution, expressed at high levels in adult heart and at lower levels in brain, testis, ovary and skeletal muscle. Up-regulated in some breast cancer cell lines. Isoform 1 and isoform 3 are expressed in fetal brain.

Its subcellular location is the nucleus. Its function is as follows. Enhances NF-kappa-B transcriptional activity by regulating the nuclear localization of the NF-kappa-B subunit RELA and promoting the phosphorylation of RELA by PRKACA. Regulates the effect of the cAMP-dependent protein kinase signaling pathway on the NF-kappa-B activation cascade. This is A-kinase-interacting protein 1 (AKIP1) from Homo sapiens (Human).